We begin with the raw amino-acid sequence, 33 residues long: Brevinin-2E (33 aa).

Residues Cys27 and Cys33 are joined by a disulfide bond.

It belongs to the frog skin active peptide (FSAP) family. Brevinin subfamily. In terms of tissue distribution, expressed by the skin glands.

It localises to the secreted. In terms of biological role, shows antibacterial activity against representative Gram-negative and Gram-positive bacterial species, and hemolytic activity. This chain is Brevinin-2E, found in Pelophylax lessonae (Pool frog).